The primary structure comprises 170 residues: Flavodoxin (170 aa).

The region spanning 5–165 is the Flavodoxin-like domain; it reads IGLFYGTQTG…RIKSWVAQLK (161 aa).

The protein belongs to the flavodoxin family. It depends on FMN as a cofactor.

In terms of biological role, low-potential electron donor to a number of redox enzymes. This is Flavodoxin (isiB) from Nostoc sp. (strain PCC 7120 / SAG 25.82 / UTEX 2576).